A 165-amino-acid polypeptide reads, in one-letter code: Cytochrome c-550-like protein (165 aa).

Positions 1–30 are cleaved as a signal peptide; that stretch reads MLNKSLLIRFVLTILIIVQVIIFDTQPVQA. Residues Cys75, Cys78, His79, and Cys129 each coordinate heme c.

This sequence belongs to the cytochrome c family. PsbV subfamily. Requires heme c as cofactor.

It is found in the cellular thylakoid membrane. Functionally, possible low-potential cytochrome c. The chain is Cytochrome c-550-like protein (psbV2) from Trichodesmium erythraeum (strain IMS101).